Here is a 66-residue protein sequence, read N- to C-terminus: Muscarinic toxin 1 (66 aa).

4 disulfides stabilise this stretch: Cys-3–Cys-24, Cys-17–Cys-42, Cys-46–Cys-58, and Cys-59–Cys-64.

It belongs to the three-finger toxin family. Short-chain subfamily. Aminergic toxin sub-subfamily. Expressed by the venom gland.

The protein localises to the secreted. Functionally, shows a non-competitive interaction with adrenergic and muscarinic receptors. Binds to alpha-2b (ADRA2B) (IC(50)=2.3 nM), alpha-1a (ADRA1A), alpha-1b (ADRA1B), and alpha-2c (ADRA2C) adrenergic receptors. Reversibly binds to M1 (CHRM1) muscarinic acetylcholine receptors, probably by interacting with the orthosteric site. Also reveals a slightly weaker effect at M3 (CHRM3) and M4 (CHRM4) receptors. The order of potency is ADRA2B&gt;&gt;CHRM1&gt;ADRA1A&gt;ADRA1B&gt;ADRA2C/CHRM4. The sequence is that of Muscarinic toxin 1 from Dendroaspis angusticeps (Eastern green mamba).